A 164-amino-acid chain; its full sequence is Arginine repressor (164 aa).

It belongs to the ArgR family.

It is found in the cytoplasm. It functions in the pathway amino-acid biosynthesis; L-arginine biosynthesis [regulation]. Its function is as follows. Regulates arginine biosynthesis genes. The sequence is that of Arginine repressor from Mycolicibacterium paratuberculosis (strain ATCC BAA-968 / K-10) (Mycobacterium paratuberculosis).